A 178-amino-acid polypeptide reads, in one-letter code: ATP synthase subunit delta (178 aa).

It belongs to the ATPase delta chain family. In terms of assembly, F-type ATPases have 2 components, F(1) - the catalytic core - and F(0) - the membrane proton channel. F(1) has five subunits: alpha(3), beta(3), gamma(1), delta(1), epsilon(1). F(0) has three main subunits: a(1), b(2) and c(10-14). The alpha and beta chains form an alternating ring which encloses part of the gamma chain. F(1) is attached to F(0) by a central stalk formed by the gamma and epsilon chains, while a peripheral stalk is formed by the delta and b chains.

Its subcellular location is the cell inner membrane. F(1)F(0) ATP synthase produces ATP from ADP in the presence of a proton or sodium gradient. F-type ATPases consist of two structural domains, F(1) containing the extramembraneous catalytic core and F(0) containing the membrane proton channel, linked together by a central stalk and a peripheral stalk. During catalysis, ATP synthesis in the catalytic domain of F(1) is coupled via a rotary mechanism of the central stalk subunits to proton translocation. Functionally, this protein is part of the stalk that links CF(0) to CF(1). It either transmits conformational changes from CF(0) to CF(1) or is implicated in proton conduction. This is ATP synthase subunit delta from Stutzerimonas stutzeri (strain A1501) (Pseudomonas stutzeri).